Here is a 401-residue protein sequence, read N- to C-terminus: Proline-rich protein 30 (401 aa).

The span at 69 to 80 (PGPHFSSDSNSD) shows a compositional bias: polar residues. Disordered regions lie at residues 69-93 (PGPH…PRSS), 129-191 (SSSL…RGAG), and 357-401 (QSPK…KSPS). Low complexity-rich tracts occupy residues 83 to 93 (PPHSSSHPRSS) and 129 to 147 (SSSL…QSPS). Polar residues-rich tracts occupy residues 148–186 (RLQD…SIKS) and 357–368 (QSPKPSQCSRSL).

The chain is Proline-rich protein 30 (Prr30) from Mus musculus (Mouse).